We begin with the raw amino-acid sequence, 524 residues long: Nucleoporin NUP56 (524 aa).

Positions 1–219 (MADDPHNTST…SSMAKFASST (219 aa)) are disordered. 3 stretches are compositionally biased toward basic and acidic residues: residues 28 to 80 (VKED…EPEK), 114 to 168 (THDE…KEVE), and 179 to 199 (SAEKPKIEEKKDESKDTKVDK). Residues 37–44 (ARRELKQT) carry the Nuclear localization signal motif. The stretch at 111–133 (KKRTHDELEQDGKEEEEKKEGEK) forms a coiled coil. Residues 200–219 (PQTSSSAFANSSMAKFASST) are compositionally biased toward polar residues. FG repeat units follow at residues 223–224 (FG), 226–227 (FG), 237–238 (FG), 247–248 (FG), 266–267 (FG), 312–313 (FG), and 328–329 (FG). Disordered regions lie at residues 247–284 (FGSKSADASAAPAGPPKLSFGSASAASPFASLNGQAGG) and 300–371 (GSSA…GEEK). Residues 248 to 277 (GSKSADASAAPAGPPKLSFGSASAASPFAS) are compositionally biased toward low complexity. Acidic residues-rich tracts occupy residues 332–345 (ESDEEDEGEGEEGE) and 352–362 (GEGEEKEEEEK). Residues 345 to 376 (EENKSENGEGEEKEEEEKEEKASGEEKKKFKL) adopt a coiled-coil conformation. Residues 377–475 (QKVHIDDGEG…TPILPAMKFQ (99 aa)) enclose the RanBD1 domain. The stretch at 503–524 (SQANATQFSNMVEKIKEKLAAA) forms a coiled coil.

In terms of assembly, the nuclear pore complex (NPC) constitutes the exclusive means of nucleocytoplasmic transport. NPCs allow the passive diffusion of ions and small molecules and the active, nuclear transport receptor-mediated bidirectional transport of macromolecules such as proteins, RNAs, ribonucleoparticles (RNPs), and ribosomal subunits across the nuclear envelope. The 55-60 MDa NPC is composed of at least 28 different subunits: AMO1, ELYS, GLE1, GLE2, MLP1, NDC1, NIC96, NSP1, NUP133, NUP145, NUP152, NUP159, NUP170, NUP188, NUP192, NUP37, NUP49, NUP53, NUP56, NUP57, NUP82, NUP84, NUP85, POM152, POM33, POM34, SEC13 and SEH1. Due to its 8-fold rotational symmetry, all subunits are present with 8 copies or multiples thereof.

The protein resides in the nucleus. The protein localises to the nuclear pore complex. It localises to the nucleus membrane. Its function is as follows. Functions as a component of the nuclear pore complex (NPC). NPC components, collectively referred to as nucleoporins (NUPs), can play the role of both NPC structural components and of docking or interaction partners for transiently associated nuclear transport factors. Active directional transport is assured by both, a Phe-Gly (FG) repeat affinity gradient for these transport factors across the NPC and a transport cofactor concentration gradient across the nuclear envelope (GSP1 and GSP2 GTPases associated predominantly with GTP in the nucleus, with GDP in the cytoplasm). The polypeptide is Nucleoporin NUP56 (NUP56) (Chaetomium thermophilum (strain DSM 1495 / CBS 144.50 / IMI 039719) (Thermochaetoides thermophila)).